Consider the following 47-residue polypeptide: Short transmembrane mitochondrial protein 1 (47 aa).

A helical membrane pass occupies residues 7-23 (GFTLGNVVGMYLAQNYD).

This sequence belongs to the STMP1 family. As to quaternary structure, interacts with components of the ubiquinol-cytochrome c oxidoreductase (cytochrome b-c1 complex, complex III, CIII), such as UQCRC1/QCR1, UQCRC2/QCR2 and UQCR10/QCR9. Interacts with components of the cytochrome c oxidase (mitochondrial respiratory chain complex IV) complex, such as MT-CO2. Expressed in monocytes and dendritic cells.

Its subcellular location is the mitochondrion inner membrane. It localises to the mitochondrion outer membrane. It is found in the mitochondrion intermembrane space. Microprotein involved in mitochondrial respiratory chain complex III (ubiquinol-cytochrome c oxidoreductase) and complex IV (mitochondrial cytochrome c oxidase complex) assembly. Required for the formation of mitochondrial supercomplexes (SCs). Also required for the activation of the NLRP3 inflammasome. The polypeptide is Short transmembrane mitochondrial protein 1 (Homo sapiens (Human)).